A 420-amino-acid polypeptide reads, in one-letter code: PHO85 cyclin-6 (420 aa).

Disordered stretches follow at residues 1 to 82, 134 to 155, and 268 to 321; these read MSIK…ESSF, QGTHTVQSSTQEDKILDGDTSN, and VTTT…GVQR. Residues 7-22 are compositionally biased toward low complexity; the sequence is SPSSTNASSSPKSTYS. S61 carries the post-translational modification Phosphoserine. A compositionally biased stretch (polar residues) spans 134 to 143; it reads QGTHTVQSST. Residues 277 to 296 are compositionally biased toward basic and acidic residues; that stretch reads AKHESPSNESSLDKANRGAD. S281 and S312 each carry phosphoserine. The segment covering 307–316 has biased composition (acidic residues); sequence NENDDSDDEN. A Phosphothreonine modification is found at T317.

This sequence belongs to the cyclin family. PHO80 subfamily. In terms of assembly, forms a cyclin-CDK complex with PHO85. Interacts with the substrate protein YJL084C. Interacts with elongin-C, which stabilizes PCL6. Interacts with the CDK inhibitor (CKI) PHO81.

Its subcellular location is the cytoplasm. It localises to the nucleus. Its function is as follows. Cyclin partner of the cyclin-dependent kinase (CDK) PHO85. Together with cyclin PCL7, controls glycogen phosphorylase and glycogen synthase activities in response to nutrient availablility. The PCL6-PHO85 cyclin-CDK holoenzyme has GLC8 kinase activity and phosphorylates and inactivates the phosphatase PP1-2 inhibitor GLC8, causing activation of PP1-2, which then dephosphorylates and activates glycogen phosphorylase. PCL6-PHO85 also phosphorylates YJL084C. The polypeptide is PHO85 cyclin-6 (PCL6) (Saccharomyces cerevisiae (strain ATCC 204508 / S288c) (Baker's yeast)).